We begin with the raw amino-acid sequence, 90 residues long: Signal recognition particle 19 kDa protein (90 aa).

This sequence belongs to the SRP19 family. Part of the signal recognition particle protein translocation system, which is composed of SRP and FtsY. Archaeal SRP consists of a 7S RNA molecule of 300 nucleotides and two protein subunits: SRP54 and SRP19.

It localises to the cytoplasm. Its function is as follows. Involved in targeting and insertion of nascent membrane proteins into the cytoplasmic membrane. Binds directly to 7S RNA and mediates binding of the 54 kDa subunit of the SRP. This Methanococcus aeolicus (strain ATCC BAA-1280 / DSM 17508 / OCM 812 / Nankai-3) protein is Signal recognition particle 19 kDa protein.